We begin with the raw amino-acid sequence, 138 residues long: Putative protein encoded by LINC02912 (138 aa).

Helical transmembrane passes span 32 to 52 (FALSFLIGKMGIIILSVCLIC) and 65 to 85 (CLINVSFSLYSCFIVFVTISQ). Residues 109-138 (SGGQSQHSWPCPERSKNLPQVSKQLRNRAG) form a disordered region.

It is found in the membrane. In Homo sapiens (Human), this protein is Putative protein encoded by LINC02912.